Reading from the N-terminus, the 640-residue chain is Threonine--tRNA ligase (640 aa).

A TGS domain is found at 1–61 (MLVVTLPDGS…DKDSQLAIIT (61 aa)). The catalytic stretch occupies residues 242 to 533 (DHRRLGKQLD…LIENHTGNMP (292 aa)). Zn(2+) contacts are provided by C333, H384, and H510.

It belongs to the class-II aminoacyl-tRNA synthetase family. As to quaternary structure, homodimer. It depends on Zn(2+) as a cofactor.

Its subcellular location is the cytoplasm. It carries out the reaction tRNA(Thr) + L-threonine + ATP = L-threonyl-tRNA(Thr) + AMP + diphosphate + H(+). Functionally, catalyzes the attachment of threonine to tRNA(Thr) in a two-step reaction: L-threonine is first activated by ATP to form Thr-AMP and then transferred to the acceptor end of tRNA(Thr). Also edits incorrectly charged L-seryl-tRNA(Thr). This Polynucleobacter necessarius subsp. necessarius (strain STIR1) protein is Threonine--tRNA ligase.